Here is an 822-residue protein sequence, read N- to C-terminus: Lysine-specific histone demethylase 2 (822 aa).

Residues 1–11 (MATPRGRTKKK) are compositionally biased toward basic residues. The interval 1–47 (MATPRGRTKKKASFDHSPDSLPLRSSGRQAKKKATETTDEDEDGGSE) is disordered. Phosphoserine is present on residues Ser-13, Ser-17, and Ser-26. Residues Cys-53, Cys-58, Cys-65, Cys-73, His-84, His-90, Cys-92, Cys-95, Cys-142, Cys-147, Cys-169, and Cys-185 each coordinate Zn(2+). Residues 133-193 (DQQLPYWVQC…HCSLPEDLRV (61 aa)) form a CW-type zinc finger. Residue Ser-247 is modified to Phosphoserine. The GLYR1-binding stretch occupies residues 273-292 (YQPNECGKALCVRPDVMELD). The SWIRM domain occupies 275-373 (PNECGKALCV…TGVLSVGADQ (99 aa)). An FAD-binding site is contributed by 383–439 (KSVIIIGAGPAGLAAARQLHNFGIKVTVLEAKDRIGGRVWDDKSFKGVTVGRGAQIV). Histone H3-binding regions lie at residues 438–467 (IVNGCINNPVALMCEQLGISMHKFGERCDL), 487–498 (FNALLDVVSEWR), and 538–572 (FHLSNLEYACGSNLHQVSARSWDHNEFFAQFAGDH). Residues 564–566 (FFA) are GLYR1-binding. FAD contacts are provided by residues Val-598, Glu-795, and 803–805 (QTV). Residues 798-814 (NRHFPQTVTGAYLSGVR) are GLYR1-binding.

This sequence belongs to the flavin monoamine oxidase family. As to quaternary structure, interacts with its cofactor GLYR1 at nucleosomes; this interaction stimulates H3K4me1 and H3K4me2 demethylation. In contrast to KDM1A, does not form a complex with RCOR1/CoREST. Possible accessory component of the polycomb repressive deubiquitinase (PR-DUB) complex, at least composed of BAP1, one of ASXL1, ASXL2 or (probably) ASXL3 and one of MBD5 or MBD6. The PR-DUB core associates with a number of accessory proteins, including FOXK1, FOXK2, KDM1B, HCFC1 and OGT; KDM1B specifically associates with ASXL2 PR-DUB complexes. FAD is required as a cofactor. The cofactor is Zn(2+).

It is found in the nucleus. The protein resides in the chromosome. The enzyme catalyses N(6),N(6)-dimethyl-L-lysyl(4)-[histone H3] + 2 A + 2 H2O = L-lysyl(4)-[histone H3] + 2 formaldehyde + 2 AH2. It carries out the reaction N(6)-methyl-L-lysyl(4)-[histone H3] + A + H2O = L-lysyl(4)-[histone H3] + formaldehyde + AH2. Histone H3K4me1 and H3K4me2 demethylase activity is inhibited by DNA, this inhibition is released in complex with GLYR1. Functionally, histone demethylase that demethylates 'Lys-4' of histone H3, a specific tag for epigenetic transcriptional activation, thereby acting as a corepressor. Required for de novo DNA methylation of a subset of imprinted genes during oogenesis. Acts by oxidizing the substrate by FAD to generate the corresponding imine that is subsequently hydrolyzed. Demethylates both mono- and di-methylated 'Lys-4' of histone H3. Has no effect on tri-methylated 'Lys-4', mono-, di- or tri-methylated 'Lys-9', mono-, di- or tri-methylated 'Lys-27', mono-, di- or tri-methylated 'Lys-36' of histone H3, or on mono-, di- or tri-methylated 'Lys-20' of histone H4. Alone, it is unable to demethylate H3K4me on nucleosomes and requires the presence of GLYR1 to achieve such activity, they form a multifunctional enzyme complex that modifies transcribed chromatin and facilitates Pol II transcription through nucleosomes. The chain is Lysine-specific histone demethylase 2 from Homo sapiens (Human).